The following is a 972-amino-acid chain: SWI/SNF-related matrix-associated actin-dependent regulator of chromatin subfamily A containing DEAD/H box 1A (972 aa).

3 disordered regions span residues 15-76 (NAVG…SDLQ), 125-177 (DEDS…EKQE), and 217-333 (SSTD…EDSI). 2 stretches are compositionally biased toward basic and acidic residues: residues 22-42 (KSPD…RKAD) and 63-72 (EVVRMGKDSA). Positions 82-127 (DMEDKIIKLLEIFPQKSKKDLLEVIENTSTLDGAVAHCLMIYGDED) constitute a CUE 1 domain. Residues 128 to 138 (SGGRKDKGGRS) show a composition bias toward basic and acidic residues. Residues 156–169 (SESEDEDSEDEESE) show a composition bias toward acidic residues. A CUE 2 domain is found at 175-218 (KQEALLKKLKRKLPDIEKEVLRDILKEHDWDYENALGSLLVFSS). Basic and acidic residues predominate over residues 237–246 (HSKEKTDKIT). Residues 247-263 (QRPSGSSSLSRWLTAAS) show a composition bias toward polar residues. A compositionally biased stretch (low complexity) spans 279–290 (KSALSKSTSKNS). Residues 307 to 332 (ASEDEDEIDSDVDSMSDDQDSEDEDS) are compositionally biased toward acidic residues. Residues 460–628 (ILLHQHKLSG…MSLLNFIMPS (169 aa)) form the Helicase ATP-binding domain. 473–480 (DEMGLGKT) serves as a coordination point for ATP. Residues 579 to 582 (DEGH) carry the DEGH box motif. The region spanning 805 to 966 (LLTKTLAKLK…AITEQMAELL (162 aa)) is the Helicase C-terminal domain.

The protein belongs to the SNF2/RAD54 helicase family.

It localises to the nucleus. Its subcellular location is the chromosome. It carries out the reaction ATP + H2O = ADP + phosphate + H(+). Functionally, DNA helicase that possesses intrinsic ATP-dependent nucleosome-remodeling activity and is both required for DNA repair and heterochromatin organization. Promotes DNA end resection of double-strand breaks (DSBs) following DNA damage: probably acts by weakening histone DNA interactions in nucleosomes flanking DSBs. Required for the restoration of heterochromatin organization after replication. This is SWI/SNF-related matrix-associated actin-dependent regulator of chromatin subfamily A containing DEAD/H box 1A (smarcad1a) from Danio rerio (Zebrafish).